Here is a 360-residue protein sequence, read N- to C-terminus: DNA replication and repair protein RecF (360 aa).

Position 30–37 (30–37) interacts with ATP; that stretch reads GDNAQGKT.

This sequence belongs to the RecF family.

The protein localises to the cytoplasm. Functionally, the RecF protein is involved in DNA metabolism; it is required for DNA replication and normal SOS inducibility. RecF binds preferentially to single-stranded, linear DNA. It also seems to bind ATP. The protein is DNA replication and repair protein RecF of Lachnoclostridium phytofermentans (strain ATCC 700394 / DSM 18823 / ISDg) (Clostridium phytofermentans).